A 497-amino-acid chain; its full sequence is Hexokinase-1 (497 aa).

A helical transmembrane segment spans residues 4–24 (ATVGAAVIGAATVCAVAALIV). The 453-residue stretch at 35–487 (ARAMAILREF…SGIGAALLAA (453 aa)) folds into the Hexokinase domain. The segment at 90 to 228 (TGDEAGVFYA…GVDMRVSALV (139 aa)) is hexokinase small subdomain. Positions 104, 105, and 106 each coordinate ADP. D-glucose-binding residues include Thr-194, Lys-195, Asn-229, and Asp-230. A hexokinase large subdomain region spans residues 229–476 (NDTVGTLAGG…TSIVFEHSND (248 aa)). Thr-253 contacts ADP. Residues Asn-256, Glu-284, and Glu-315 each contribute to the D-glucose site. Gly-441 provides a ligand contact to ADP.

It belongs to the hexokinase family.

It is found in the plastid. It localises to the chloroplast outer membrane. The enzyme catalyses a D-hexose + ATP = a D-hexose 6-phosphate + ADP + H(+). It catalyses the reaction D-fructose + ATP = D-fructose 6-phosphate + ADP + H(+). The catalysed reaction is D-glucose + ATP = D-glucose 6-phosphate + ADP + H(+). The protein operates within carbohydrate metabolism; hexose metabolism. Its pathway is carbohydrate degradation; glycolysis; D-glyceraldehyde 3-phosphate and glycerone phosphate from D-glucose: step 1/4. Functionally, fructose and glucose phosphorylating enzyme. This Nicotiana tabacum (Common tobacco) protein is Hexokinase-1 (HXK1).